Here is a 456-residue protein sequence, read N- to C-terminus: FAD-dependent monooxygenase sor5 (456 aa).

A helical transmembrane segment spans residues Pro18–Leu38. The N-linked (GlcNAc...) asparagine glycan is linked to Asn43. 2 residues coordinate FAD: Glu48 and Arg119. Residue Arg200 is part of the active site. Asp331 and Ala344 together coordinate FAD.

It belongs to the paxM FAD-dependent monooxygenase family. FAD is required as a cofactor.

It localises to the membrane. Its pathway is secondary metabolite biosynthesis. Its function is as follows. FAD-dependent monooxygenase; part of the SOR gene cluster that mediates the biosynthesis of sorbicillinoids, a diverse group of yellow secondary metabolites that restrict growth of competing pathogenic fungi but not of bacteria. Sorbicillinoids biosynthesis requires the action of two PKSs. The SOR cluster is required for the production of trichodimerol and dihydrotrichotetronin, with sor2 being sufficient for production of trichodimerol, but not dihydrotrichotetronin in the light. Sor1 iteratively combines three acetyl units and the growing chain is modified by the ketoacyl reductase subunit, and optional by the enoyl reductase subunit in the second cycle. The polyketide is then handed over to the PKS sor2, which adds three more acetyl units, and two methyl groups. Sor2 releases an aldehyde, which undergoes spontaneous cyclization resulting in the formation of sorbicillin or 2',3'-dihydrosorbicillin. The monooxygenase sor5 oxidizes sorbicillin and 2',3'-dihydrosorbicillin to 2',3'-dihydrosorbicillinol and sorbicillinol, respectively. The oxidoreductase sor8 further converts sorbicillinol into oxosorbicillinol. Sorbicillinol is the building block for the other sorbicillinoids such as disorbicillinol, bisvertinolon, dihydrobisvertinolone, and dihydrotrichotetronine. The polypeptide is FAD-dependent monooxygenase sor5 (Hypocrea jecorina (strain QM6a) (Trichoderma reesei)).